A 329-amino-acid chain; its full sequence is Malate dehydrogenase (329 aa).

NAD(+) is bound at residue 13–19; it reads GAAGNIS. The substrate site is built by arginine 94 and arginine 100. Residues asparagine 107, glutamine 114, and 131–133 each bind NAD(+); that span reads VGN. The substrate site is built by asparagine 133 and arginine 164. Catalysis depends on histidine 189, which acts as the Proton acceptor.

It belongs to the LDH/MDH superfamily. MDH type 2 family.

The enzyme catalyses (S)-malate + NAD(+) = oxaloacetate + NADH + H(+). Functionally, catalyzes the reversible oxidation of malate to oxaloacetate. The polypeptide is Malate dehydrogenase (Psychrobacter arcticus (strain DSM 17307 / VKM B-2377 / 273-4)).